Reading from the N-terminus, the 188-residue chain is Elongation factor P (188 aa).

Position 34 is an N6-(3,6-diaminohexanoyl)-5-hydroxylysine (Lys34).

The protein belongs to the elongation factor P family. May be beta-lysylated on the epsilon-amino group of Lys-34 by the combined action of EpmA and EpmB, and then hydroxylated on the C5 position of the same residue by EpmC (if this protein is present). Lysylation is critical for the stimulatory effect of EF-P on peptide-bond formation. The lysylation moiety may extend toward the peptidyltransferase center and stabilize the terminal 3-CCA end of the tRNA. Hydroxylation of the C5 position on Lys-34 may allow additional potential stabilizing hydrogen-bond interactions with the P-tRNA.

Its subcellular location is the cytoplasm. It participates in protein biosynthesis; polypeptide chain elongation. Involved in peptide bond synthesis. Alleviates ribosome stalling that occurs when 3 or more consecutive Pro residues or the sequence PPG is present in a protein, possibly by augmenting the peptidyl transferase activity of the ribosome. Modification of Lys-34 is required for alleviation. In Vibrio cholerae serotype O1 (strain ATCC 39541 / Classical Ogawa 395 / O395), this protein is Elongation factor P.